Reading from the N-terminus, the 226-residue chain is Ribosome maturation factor RimP (226 aa).

Residues 190–226 (VFPDTTRPQPGGKTGQRKKAQPKKPARGGAPHDDTTD) form a disordered region. Residues 204 to 215 (GQRKKAQPKKPA) show a composition bias toward basic residues.

It belongs to the RimP family.

It localises to the cytoplasm. Required for maturation of 30S ribosomal subunits. The protein is Ribosome maturation factor RimP of Nitratidesulfovibrio vulgaris (strain DSM 19637 / Miyazaki F) (Desulfovibrio vulgaris).